The primary structure comprises 92 residues: Small ribosomal subunit protein uS19 (92 aa).

It belongs to the universal ribosomal protein uS19 family.

Protein S19 forms a complex with S13 that binds strongly to the 16S ribosomal RNA. The sequence is that of Small ribosomal subunit protein uS19 from Methylobacterium sp. (strain 4-46).